The primary structure comprises 521 residues: HTH-type transcriptional regulatory protein TyrR (521 aa).

Residues arginine 2–tyrosine 72 form the ACT domain. The region spanning glutamate 78 to isoleucine 120 is the PAS domain. One can recognise a Sigma-54 factor interaction domain in the interval isoleucine 207–threonine 436. ATP contacts are provided by residues glycine 235–aspartate 242 and alanine 298–glutamate 307. Positions serine 489–arginine 509 form a DNA-binding region, H-T-H motif.

In terms of assembly, homodimer. In presence of tyrosine (or high concentrations of phenylalanine or tryptophan) and ATP, it self-associates to form an hexamer.

The protein resides in the cytoplasm. Functionally, dual transcriptional regulator of the TyrR regulon, which includes a number of genes coding for proteins involved in the biosynthesis or transport of the three aromatic amino acids, phenylalanine, tyrosine and tryptophan. These three aromatic amino acids act as effectors which bind to the TyrR protein to form an active regulatory protein. Acts by binding specifically to TyrR boxes in the promoter region of the target genes. In Enterobacter agglomerans (Erwinia herbicola), this protein is HTH-type transcriptional regulatory protein TyrR.